We begin with the raw amino-acid sequence, 306 residues long: Acetyl-coenzyme A carboxylase carboxyl transferase subunit beta (306 aa).

Residues Leu25–Thr294 enclose the CoA carboxyltransferase N-terminal domain. Residues Asn287–Ser296 are compositionally biased toward low complexity. Positions Asn287–Ala306 are disordered.

Belongs to the AccD/PCCB family. In terms of assembly, acetyl-CoA carboxylase is a heterohexamer composed of biotin carboxyl carrier protein (AccB), biotin carboxylase (AccC) and two subunits each of ACCase subunit alpha (AccA) and ACCase subunit beta (AccD).

The protein resides in the cytoplasm. It catalyses the reaction N(6)-carboxybiotinyl-L-lysyl-[protein] + acetyl-CoA = N(6)-biotinyl-L-lysyl-[protein] + malonyl-CoA. Its pathway is lipid metabolism; malonyl-CoA biosynthesis; malonyl-CoA from acetyl-CoA: step 1/1. In terms of biological role, component of the acetyl coenzyme A carboxylase (ACC) complex. Biotin carboxylase (BC) catalyzes the carboxylation of biotin on its carrier protein (BCCP) and then the CO(2) group is transferred by the transcarboxylase to acetyl-CoA to form malonyl-CoA. This is Acetyl-coenzyme A carboxylase carboxyl transferase subunit beta from Bartonella henselae (strain ATCC 49882 / DSM 28221 / CCUG 30454 / Houston 1) (Rochalimaea henselae).